A 229-amino-acid chain; its full sequence is Uracil-DNA glycosylase (229 aa).

Aspartate 71 functions as the Proton acceptor in the catalytic mechanism.

This sequence belongs to the uracil-DNA glycosylase (UDG) superfamily. UNG family.

The protein localises to the cytoplasm. It carries out the reaction Hydrolyzes single-stranded DNA or mismatched double-stranded DNA and polynucleotides, releasing free uracil.. Excises uracil residues from the DNA which can arise as a result of misincorporation of dUMP residues by DNA polymerase or due to deamination of cytosine. The polypeptide is Uracil-DNA glycosylase (Campylobacter lari (strain RM2100 / D67 / ATCC BAA-1060)).